Consider the following 280-residue polypeptide: Probable 6-phosphogluconolactonase 2 (280 aa).

It belongs to the glucosamine/galactosamine-6-phosphate isomerase family. 6-phosphogluconolactonase subfamily.

The enzyme catalyses 6-phospho-D-glucono-1,5-lactone + H2O = 6-phospho-D-gluconate + H(+). The protein operates within carbohydrate degradation; pentose phosphate pathway; D-ribulose 5-phosphate from D-glucose 6-phosphate (oxidative stage): step 2/3. Its function is as follows. Hydrolysis of 6-phosphogluconolactone to 6-phosphogluconate. In Oryza sativa subsp. indica (Rice), this protein is Probable 6-phosphogluconolactonase 2.